The primary structure comprises 634 residues: 1-deoxy-D-xylulose-5-phosphate synthase (634 aa).

Residues His74 and 115-117 (AHS) contribute to the thiamine diphosphate site. Residue Asp146 coordinates Mg(2+). Residues 147–148 (GA), Asn176, Tyr283, and Glu365 each bind thiamine diphosphate. Position 176 (Asn176) interacts with Mg(2+).

Belongs to the transketolase family. DXPS subfamily. As to quaternary structure, homodimer. Requires Mg(2+) as cofactor. Thiamine diphosphate is required as a cofactor.

It carries out the reaction D-glyceraldehyde 3-phosphate + pyruvate + H(+) = 1-deoxy-D-xylulose 5-phosphate + CO2. The protein operates within metabolic intermediate biosynthesis; 1-deoxy-D-xylulose 5-phosphate biosynthesis; 1-deoxy-D-xylulose 5-phosphate from D-glyceraldehyde 3-phosphate and pyruvate: step 1/1. Its function is as follows. Catalyzes the acyloin condensation reaction between C atoms 2 and 3 of pyruvate and glyceraldehyde 3-phosphate to yield 1-deoxy-D-xylulose-5-phosphate (DXP). This chain is 1-deoxy-D-xylulose-5-phosphate synthase, found in Burkholderia cenocepacia (strain ATCC BAA-245 / DSM 16553 / LMG 16656 / NCTC 13227 / J2315 / CF5610) (Burkholderia cepacia (strain J2315)).